Here is a 518-residue protein sequence, read N- to C-terminus: Protein translocase subunit SecD (518 aa).

6 helical membrane passes run isoleucine 9 to glutamine 29, glycine 356 to glycine 376, valine 377 to leucine 397, leucine 406 to isoleucine 426, leucine 463 to alanine 483, and isoleucine 486 to tryptophan 506.

This sequence belongs to the SecD/SecF family. SecD subfamily. As to quaternary structure, forms a complex with SecF. Part of the essential Sec protein translocation apparatus which comprises SecA, SecYEG and auxiliary proteins SecDF-YajC and YidC.

It is found in the cell inner membrane. In terms of biological role, part of the Sec protein translocase complex. Interacts with the SecYEG preprotein conducting channel. SecDF uses the proton motive force (PMF) to complete protein translocation after the ATP-dependent function of SecA. This is Protein translocase subunit SecD from Rickettsia prowazekii (strain Madrid E).